A 544-amino-acid chain; its full sequence is Probable protein kinase UbiB (544 aa).

A Protein kinase domain is found at 123 to 501 (DFDIEPLASA…KRQQATGKFL (379 aa)). Residues 129 to 137 (LASASIAQV) and K152 each bind ATP. D287 (proton acceptor) is an active-site residue. Residues 500–520 (FLFGVGATLVVCSAILVSSPY) traverse the membrane as a helical segment.

Belongs to the ABC1 family. UbiB subfamily.

Its subcellular location is the cell inner membrane. Its pathway is cofactor biosynthesis; ubiquinone biosynthesis [regulation]. Its function is as follows. Is probably a protein kinase regulator of UbiI activity which is involved in aerobic coenzyme Q (ubiquinone) biosynthesis. The sequence is that of Probable protein kinase UbiB from Vibrio atlanticus (strain LGP32) (Vibrio splendidus (strain Mel32)).